The sequence spans 259 residues: Tryptophan synthase alpha chain (259 aa).

Residues glutamate 42 and aspartate 53 each act as proton acceptor in the active site.

The protein belongs to the TrpA family. In terms of assembly, tetramer of two alpha and two beta chains.

The enzyme catalyses (1S,2R)-1-C-(indol-3-yl)glycerol 3-phosphate + L-serine = D-glyceraldehyde 3-phosphate + L-tryptophan + H2O. Its pathway is amino-acid biosynthesis; L-tryptophan biosynthesis; L-tryptophan from chorismate: step 5/5. In terms of biological role, the alpha subunit is responsible for the aldol cleavage of indoleglycerol phosphate to indole and glyceraldehyde 3-phosphate. This is Tryptophan synthase alpha chain from Erythrobacter litoralis (strain HTCC2594).